A 478-amino-acid polypeptide reads, in one-letter code: Cytochrome c-552 (478 aa).

Positions 1–27 are cleaved as a signal peptide; it reads MKKQWTRRSAAAIAMVTTLLLSSHSFA. A heme c-binding site is contributed by H91. Residues C119, C122, and K123 each contribute to the heme site. C157, C160, H161, C206, C209, and H210 together coordinate heme c. The Ca(2+) site is built by E212, Y213, K258, and Q260. Y213 contributes to the substrate binding site. H261 is a binding site for substrate. The heme c site is built by H272, C279, C282, H283, H298, C311, C314, H315, and H390.

The protein belongs to the cytochrome c-552 family. Ca(2+) serves as cofactor. It depends on heme c as a cofactor.

It localises to the periplasm. The enzyme catalyses 6 Fe(III)-[cytochrome c] + NH4(+) + 2 H2O = 6 Fe(II)-[cytochrome c] + nitrite + 8 H(+). The protein operates within nitrogen metabolism; nitrate reduction (assimilation). In terms of biological role, catalyzes the reduction of nitrite to ammonia, consuming six electrons in the process. This Aliivibrio fischeri (strain ATCC 700601 / ES114) (Vibrio fischeri) protein is Cytochrome c-552.